The chain runs to 146 residues: Hemoglobin subunit beta (146 aa).

Residue V1 is modified to N-acetylvaline. Residues 2–146 (HLSAEEKAAV…VANALAHKYH (145 aa)) enclose the Globin domain. Phosphothreonine is present on T12. Residue S44 is modified to Phosphoserine. K59 bears the N6-acetyllysine mark. H63 is a binding site for heme b. At K82 the chain carries N6-acetyllysine. H92 is a heme b binding site. S-nitrosocysteine is present on C93. K144 is modified (N6-acetyllysine).

Belongs to the globin family. As to quaternary structure, heterotetramer of two alpha chains and two beta chains. As to expression, red blood cells.

Its function is as follows. Involved in oxygen transport from the lung to the various peripheral tissues. This is Hemoglobin subunit beta (HBB) from Ctenodactylus gundi (Northern gundi).